The primary structure comprises 183 residues: ATP synthase subunit delta (183 aa).

The protein belongs to the ATPase delta chain family. F-type ATPases have 2 components, F(1) - the catalytic core - and F(0) - the membrane proton channel. F(1) has five subunits: alpha(3), beta(3), gamma(1), delta(1), epsilon(1). F(0) has three main subunits: a(1), b(2) and c(10-14). The alpha and beta chains form an alternating ring which encloses part of the gamma chain. F(1) is attached to F(0) by a central stalk formed by the gamma and epsilon chains, while a peripheral stalk is formed by the delta and b chains.

It localises to the cell inner membrane. F(1)F(0) ATP synthase produces ATP from ADP in the presence of a proton or sodium gradient. F-type ATPases consist of two structural domains, F(1) containing the extramembraneous catalytic core and F(0) containing the membrane proton channel, linked together by a central stalk and a peripheral stalk. During catalysis, ATP synthesis in the catalytic domain of F(1) is coupled via a rotary mechanism of the central stalk subunits to proton translocation. In terms of biological role, this protein is part of the stalk that links CF(0) to CF(1). It either transmits conformational changes from CF(0) to CF(1) or is implicated in proton conduction. The sequence is that of ATP synthase subunit delta from Ehrlichia canis (strain Jake).